Consider the following 82-residue polypeptide: Putative membrane protein insertion efficiency factor (82 aa).

It belongs to the UPF0161 family.

It is found in the cell inner membrane. Could be involved in insertion of integral membrane proteins into the membrane. The polypeptide is Putative membrane protein insertion efficiency factor (Rickettsia typhi (strain ATCC VR-144 / Wilmington)).